The following is a 174-amino-acid chain: 3-hydroxydecanoyl-[acyl-carrier-protein] dehydratase (174 aa).

Residue histidine 73 is part of the active site.

Belongs to the thioester dehydratase family. FabA subfamily. Homodimer.

It localises to the cytoplasm. The enzyme catalyses a (3R)-hydroxyacyl-[ACP] = a (2E)-enoyl-[ACP] + H2O. It carries out the reaction (3R)-hydroxydecanoyl-[ACP] = (2E)-decenoyl-[ACP] + H2O. The catalysed reaction is (2E)-decenoyl-[ACP] = (3Z)-decenoyl-[ACP]. Its pathway is lipid metabolism; fatty acid biosynthesis. Necessary for the introduction of cis unsaturation into fatty acids. Catalyzes the dehydration of (3R)-3-hydroxydecanoyl-ACP to E-(2)-decenoyl-ACP and then its isomerization to Z-(3)-decenoyl-ACP. Can catalyze the dehydratase reaction for beta-hydroxyacyl-ACPs with saturated chain lengths up to 16:0, being most active on intermediate chain length. This Saccharophagus degradans (strain 2-40 / ATCC 43961 / DSM 17024) protein is 3-hydroxydecanoyl-[acyl-carrier-protein] dehydratase.